A 250-amino-acid polypeptide reads, in one-letter code: Triosephosphate isomerase (250 aa).

A substrate-binding site is contributed by 9-11; that stretch reads NWK. The active-site Electrophile is His95. The active-site Proton acceptor is the Glu167. Residues Gly173, Ser213, and 234-235 contribute to the substrate site; that span reads GG.

It belongs to the triosephosphate isomerase family. In terms of assembly, homodimer.

It localises to the cytoplasm. It carries out the reaction D-glyceraldehyde 3-phosphate = dihydroxyacetone phosphate. It participates in carbohydrate biosynthesis; gluconeogenesis. It functions in the pathway carbohydrate degradation; glycolysis; D-glyceraldehyde 3-phosphate from glycerone phosphate: step 1/1. Involved in the gluconeogenesis. Catalyzes stereospecifically the conversion of dihydroxyacetone phosphate (DHAP) to D-glyceraldehyde-3-phosphate (G3P). This is Triosephosphate isomerase from Exiguobacterium sibiricum (strain DSM 17290 / CCUG 55495 / CIP 109462 / JCM 13490 / 255-15).